The chain runs to 186 residues: MSGPADSIEIQNVVASTGIGQELDLEALADDLPGADFNPDNFPGLVYRTQDPKAAALIFRSGKIVCTGAKSIDDVHDALGIIFDKLRELKIPVDDEPEITVQNIVSSADLGHNLNLNALAIGLGLEDVEYEPEQFPGLVYRMDEPKVVILLFGSGKIVITGGKRTDDAETAVEEIVERIDALGLLG.

A run of 2 repeats spans residues 10-86 (IQNV…FDKL) and 101-179 (VQNI…VERI). Residues K53 and K63 each participate in a glycyl lysine isopeptide (Lys-Gly) (interchain with G-Cter in SAMP2) cross-link.

This sequence belongs to the TBP family.

Functionally, general factor that plays a role in the activation of archaeal genes transcribed by RNA polymerase. Binds specifically to the TATA box promoter element which lies close to the position of transcription initiation. The sequence is that of TATA-box-binding protein 2 (tbp2) from Haloferax volcanii (strain ATCC 29605 / DSM 3757 / JCM 8879 / NBRC 14742 / NCIMB 2012 / VKM B-1768 / DS2) (Halobacterium volcanii).